We begin with the raw amino-acid sequence, 359 residues long: DNA polymerase IV (359 aa).

The region spanning 4–184 (IVHVDMDAFY…LKVNRIPGVG (181 aa)) is the UmuC domain. Residues D8 and D102 each contribute to the Mg(2+) site. Residue E103 is part of the active site.

It belongs to the DNA polymerase type-Y family. Monomer. It depends on Mg(2+) as a cofactor.

The protein resides in the cytoplasm. It carries out the reaction DNA(n) + a 2'-deoxyribonucleoside 5'-triphosphate = DNA(n+1) + diphosphate. Its function is as follows. Poorly processive, error-prone DNA polymerase involved in untargeted mutagenesis. Copies undamaged DNA at stalled replication forks, which arise in vivo from mismatched or misaligned primer ends. These misaligned primers can be extended by PolIV. Exhibits no 3'-5' exonuclease (proofreading) activity. May be involved in translesional synthesis, in conjunction with the beta clamp from PolIII. In Xanthomonas oryzae pv. oryzae (strain MAFF 311018), this protein is DNA polymerase IV.